Here is a 2803-residue protein sequence, read N- to C-terminus: MDGVAEFSEYVSETVDVPSPFDLLEPPTSGGFLKLSKPCCYIFPGGRGDSALFAVNGFNILVDGGSDRKSCFWKLVRHLDRIDSVLLTHIGADNLPGINGLLQRKVAELEEEQSQGSSSYSDWVKNLISPELGVVFFNVPEKLRLPDASRKAKRSIEEACLTLQHLNRLGIQAEPLYRVVSNTIEPLTLFHKMGVGRLDMYVLNPVKDSKEMQFLMQKWAGNSKAKTGIVLPNGKEAEISVPYLTSITALVVWLPANPTEKIVRVLFPGNAPQNKILEGLEKLRHLDFLRYPVATQKDLASGAVPTNLKPSKIKQRADSKESLKATTKTAVSKLAKREEVVEEGAKEARSELAKELAKTEKKAKESSEKPPEKPAKPERVKTESSEALKAEKRKLIKDKVGKKHLKEKISKLEEKKDKEKKEIKKERKELKKDEGRKEEKKDAKKEEKRKDTKPELKKISKPDLKPFTPEVRKTLYKAKVPGRVKIDRSRAIRGEKELSSEPQTPPAQKGTVPLPTISGHRELVLSSPEDLTQDFEEMKREERALLAEQRDTGLGDKPFPLDTAEEGPPSTAIQGTPPSVPGLGQEEHVMKEKELVPEVPEEQGSKDRGLDSGAETEEEKDTWEEKKQREAERLPDRTEAREESEPEVKEDVIEKAELEEMEEVHPSDEEEEDATKAEGFYQKHMQEPLKVTPRSREAFGGRELGLQGKAPEKETSLFLSSLTTPAGATEHVSYIQDETIPGYSETEQTISDEEIHDEPEERPAPPRFHTSTYDLPGPEGAGPFEASQPADSAVPATSGKVYGTPETELTYPTNIVAAPLAEEEHVSSATSITECDKLSSFATSVAEDQSVASLTAPQTEETGKSSLLLDTVTSIPSSRTEATQGLDYVPSAGTISPTSSLEEDKGFKSPPCEDFSVTGESEKRGEIIGKGLSGERAVEEEEEETANVEMSEKLCSQYGTPVFSAPGHALHPGEPALGEAEERCLSPDDSTVKMASPPPSGPPSATHTPFHQSPVEEKSEPQDFQEADSWGDTKRTPGVGKEDAAEETVKPGPEEGTLEKEEKVPPPRSPQAQEAPVNIDEGLTGCTIQLLPAQDKAIVFEIMEAGEPTGPILGAEALPGGLRTLPQEPGKPQKDEVLRYPDRSLSPEDAESLSVLSVPSPDTANQEPTPKSPCGLTEQYLHKDRWPEVSPEDTQSLSLSEESPSKETSLDVSSKQLSPESLGTLQFGELNLGKEEMGHLMQAEDTSHHTAPMSVPEPHAATASPPTDGTTRYSAQTDITDDSLDRKSPASSFSHSTPSGNGKYLPGAITSPDEHILTPDSSFSKSPESLPGPALEDIAIKWEDKVPGLKDRTSEQKKEPEPKDEVLQQKDKTLEHKEVVEPKDTAIYQKDEALHVKNEAVKQQDKALEQKGRDLEQKDTALEQKDKALEPKDKDLEEKDKALEQKDKIPEEKDKALEQKDTALEQKDKALEPKDKDLEQKDRVLEQKEKIPEEKDKALDQKVRSVEHKAPEDTVAEMKDRDLEQTDKAPEQKHQAQEQKDKVSEKKDQALEQKYWALGQKDEALEQNIQALEENHQTQEQESLVQEDKTRKPKMLEEKSPEKVKAMEEKLEALLEKTKALGLEESLVQEGRAREQEEKYWRGQDVVQEWQETSPTREEPAGEQKELAPAWEDTSPEQDNRYWRGREDVALEQDTYWRELSCERKVWFPHELDGQGARPHYTEERESTFLDEGPDDEQEVPLREHATRSPWASDFKDFQESSPQKGLEVERWLAESPVGLPPEEEDKLTRSPFEIISPPASPPEMVGQRVPSAPGQESPIPDPKLMPHMKNEPTTPSWLADIPPWVPKDRPLPPAPLSPAPGPPTPAPESHTPAPFSWGTAEYDSVVAAVQEGAAELEGGPYSPLGKDYRKAEGEREEEGRAEAPDKSSHSSKVPEASKSHATTEPEQTEPEQREPTPYPDERSFQYADIYEQMMLTGLGPACPTREPPLGAAGDWPPCLSTKEAAAGRNTSAEKELSSPISPKSLQSDTPTFSYAALAGPTVPPRPEPGPSMEPSLTPPAVPPRAPILSKGPSPPLNGNILSCSPDRRSPSPKESGRSHWDDSTSDSELEKGAREQPEKEAQSPSPPHPIPMGSPTLWPETEAHVSPPLDSHLGPARPSLDFPASAFGFSSLQPAPPQLPSPAEPRSAPCGSLAFSGDRALALAPGPPTRTRHDEYLEVTKAPSLDSSLPQLPSPSSPGAPLLSNLPRPASPALSEGSSSEATTPVISSVAERFSPSLEAAEQESGELDPGMEPAAHSLWDLTPLSPAPPASLDLALAPAPSLPGDMGDGILPCHLECSEAATEKPSPFQVPSEDCAANGPTETSPNPPGPAPAKAENEEAAACPAWERGAWPEGAERSSRPDTLLSPEQPVCPAGGSGGPPSSASPEVEAGPQGCATEPRPHRGELSPSFLNPPLPPSIDDRDLSTEEVRLVGRGGRRRVGGPGTTGGPCPVTDETPPTSASDSGSSQSDSDVPPETEECPSITAEAALDSDEDGDFLPVDKAGGVSGTHHPRPGHDPPPLPQPDPRPSPPRPDVCMADPEGLSSESGRVERLREKEKVQGRVGRRAPGKAKPASPARRLDLRGKRSPTPGKGPADRASRAPPRPRSTTSQVTPAEEKDGHSPMSKGLVNGLKAGPMALSSKGSSGAPVYVDLAYIPNHCSGKTADLDFFRRVRASYYVVSGNDPANGEPSRAVLDALLEGKAQWGENLQVTLIPTHDTEVTREWYQQTHEQQQQLNVLVLASSSTVVMQDESFPACKIEF.

Residues S114, S117, S118, S121, and S155 each carry the phosphoserine modification. The residue at position 177 (Y177) is a Phosphotyrosine. Disordered regions lie at residues 302 to 466 (GAVP…DLKP) and 486 to 516 (IDRSRAIRGEKELSSEPQTPPAQKGTVPLPT). Phosphoserine occurs at positions 319, 322, and 384. The segment covering 335 to 390 (AKREEVVEEGAKEARSELAKELAKTEKKAKESSEKPPEKPAKPERVKTESSEALKA) has biased composition (basic and acidic residues). Residues 391–406 (EKRKLIKDKVGKKHLK) show a composition bias toward basic residues. Composition is skewed to basic and acidic residues over residues 407–464 (EKIS…KPDL) and 486–499 (IDRSRAIRGEKELS). 8 tandem repeats follow at residues 415-417 (KKD), 420-422 (KKE), 427-429 (RKE), 431-433 (KKD), 436-438 (RKE), 440-442 (KKD), 444-446 (KKE), and 449-451 (RKD). The tract at residues 415–541 (KKDKEKKEIK…TQDFEEMKRE (127 aa)) is 9 X 3 AA repeats of K-K-[DE]. T504 bears the Phosphothreonine mark. 2 positions are modified to phosphoserine: S526 and S527. Repeat unit 9 spans residues 539-541 (KRE). Composition is skewed to basic and acidic residues over residues 539–554 (KREERALLAEQRDTGL) and 585–596 (QEEHVMKEKELV). Disordered regions lie at residues 539-712 (KREE…KAPE), 734-806 (YIQD…GTPE), 847-1080 (EDQS…VNID), 1109-1548 (TGPI…EKKD), and 1573-1605 (EENHQTQEQESLVQEDKTRKPKMLEEKSPEKVK). A phosphoserine mark is found at S605 and S612. The residue at position 616 (T616) is a Phosphothreonine. Over residues 623-667 (WEEKKQREAERLPDRTEAREESEPEVKEDVIEKAELEEMEEVHPS) the composition is skewed to basic and acidic residues. Phosphoserine occurs at positions 644, 667, and 787. Composition is skewed to polar residues over residues 847 to 860 (EDQSVASLTAPQTE) and 871 to 883 (TVTSIPSSRTEAT). A phosphoserine mark is found at S874, S877, S878, and S891. The residue at position 894 (T894) is a Phosphothreonine. 9 positions are modified to phosphoserine: S896, S900, S909, S986, S996, S1004, S1013, S1019, and S1029. Residues 1031–1065 (GDTKRTPGVGKEDAAEETVKPGPEEGTLEKEEKVP) are compositionally biased toward basic and acidic residues. A phosphoserine mark is found at S1069, S1144, S1146, S1160, S1172, S1190, S1200, S1203, S1209, S1218, S1221, and S1264. Basic and acidic residues predominate over residues 1131-1146 (KPQKDEVLRYPDRSLS). Positions 1154 to 1169 (SVLSVPSPDTANQEPT) are enriched in polar residues. 2 stretches are compositionally biased toward polar residues: residues 1211-1224 (DVSSKQLSPESLGT) and 1264-1278 (SPPTDGTTRYSAQTD). The segment covering 1289-1299 (PASSFSHSTPS) has biased composition (low complexity). A phosphoserine mark is found at S1326, S1329, S1544, S1600, and S1626. Basic and acidic residues-rich tracts occupy residues 1338–1548 (IAIK…EKKD) and 1586–1605 (QEDKTRKPKMLEEKSPEKVK). Residues 1632–1642 (RAREQEEKYWR) are compositionally biased toward basic and acidic residues. Disordered regions lie at residues 1632–1684 (RARE…RYWR), 1713–1879 (DGQG…FSWG), and 1892–2673 (EGAA…LVNG). The residue at position 1654 (S1654) is a Phosphoserine. The segment covering 1655–1666 (PTREEPAGEQKE) has biased composition (basic and acidic residues). Residues S1675, S1749, S1762, S1776, S1791, S1797, S1801, S1812, and S1818 each carry the phosphoserine modification. Pro residues predominate over residues 1852–1867 (LPPAPLSPAPGPPTPA). Residues 1907 to 1929 (KDYRKAEGEREEEGRAEAPDKSS) show a composition bias toward basic and acidic residues. S1931 carries the post-translational modification Phosphoserine. The segment covering 1951–1964 (PEQREPTPYPDERS) has biased composition (basic and acidic residues). Residue T1957 is modified to Phosphothreonine. Over residues 2019–2033 (SPISPKSLQSDTPTF) the composition is skewed to polar residues. At S2022 the chain carries Phosphoserine. Residues 2042–2066 (TVPPRPEPGPSMEPSLTPPAVPPRA) show a composition bias toward pro residues. T2058 is modified (phosphothreonine). Phosphoserine occurs at positions 2074, 2104, 2106, and 2108. Over residues 2086–2122 (PDRRSPSPKESGRSHWDDSTSDSELEKGAREQPEKEA) the composition is skewed to basic and acidic residues. Pro residues predominate over residues 2175-2184 (PAPPQLPSPA). Residues S2235, S2252, S2256, S2259, and S2260 each carry the phosphoserine modification. A compositionally biased stretch (polar residues) spans 2257 to 2268 (EGSSSEATTPVI). Over residues 2312–2325 (ASLDLALAPAPSLP) the composition is skewed to low complexity. Residue S2449 is modified to Phosphoserine. The span at 2461–2473 (IDDRDLSTEEVRL) shows a compositional bias: basic and acidic residues. The span at 2502–2514 (SASDSGSSQSDSD) shows a compositional bias: low complexity. Residues 2559–2575 (DPPPLPQPDPRPSPPRP) are compositionally biased toward pro residues. Over residues 2590 to 2602 (GRVERLREKEKVQ) the composition is skewed to basic and acidic residues. Phosphoserine occurs at positions 2649 and 2664.

The protein belongs to the MAP1 family. 3 different light chains, LC1 (a cleavage product of MAP1B), LC2 (a cleavage product of MAP1A) and LC3 (produced by one of the MAP1LC3 genes), can associate with the MAP1A or MAP1B heavy chains. Interacts with TIAM2. Interacts with guanylate kinase-like domain of DLG1, DLG2 and DLG4. Binds to CSNK1D. In terms of assembly, interacts with ELAVL4. Post-translationally, phosphorylated by CSNK1D. LC2 is generated from MAP1A by proteolytic processing. In terms of tissue distribution, brain.

Its subcellular location is the cytoplasm. It is found in the cytoskeleton. Structural protein involved in the filamentous cross-bridging between microtubules and other skeletal elements. This is Microtubule-associated protein 1A (MAP1A) from Homo sapiens (Human).